The sequence spans 50 residues: Photosystem II reaction center protein M (50 aa).

A helical membrane pass occupies residues 7-27 (GFIASLLFVGVPTIFLIGLFI).

It belongs to the PsbM family. As to quaternary structure, PSII is composed of 1 copy each of membrane proteins PsbA, PsbB, PsbC, PsbD, PsbE, PsbF, PsbH, PsbI, PsbJ, PsbK, PsbL, PsbM, PsbT, PsbX, PsbY, Psb30/Ycf12, peripheral proteins PsbO, CyanoQ (PsbQ), PsbU, PsbV and a large number of cofactors. It forms dimeric complexes.

Its subcellular location is the cellular thylakoid membrane. In terms of biological role, one of the components of the core complex of photosystem II (PSII). PSII is a light-driven water:plastoquinone oxidoreductase that uses light energy to abstract electrons from H(2)O, generating O(2) and a proton gradient subsequently used for ATP formation. It consists of a core antenna complex that captures photons, and an electron transfer chain that converts photonic excitation into a charge separation. This subunit is found at the monomer-monomer interface. In Prochlorococcus marinus (strain MIT 9312), this protein is Photosystem II reaction center protein M.